The following is a 117-amino-acid chain: Movement and RNA silencing protein (117 aa).

A helical membrane pass occupies residues 15–35 (FLFFGAIFIAITILYILLVLL). The tract at residues 83–117 (RDQEPAVIPHVSQVIPSQPNRRDDQGRRGNAGPMF) is disordered.

It is found in the host cell membrane. Its function is as follows. Transports viral genome to neighboring plant cells directly through plasmosdesmata, without any budding. The movement protein allows efficient cell to cell propagation, by bypassing the host cell wall barrier. Begomovirus genome is shuttled out of nucleus by Nuclear shuttle protein (NSP) and the movement protein transports the DNA-NSP complex to cell plasmodesmata and facilitates further movement across the cell wall. Acts as a suppressor of RNA-mediated gene silencing, also known as post-transcriptional gene silencing (PTGS), a mechanism of plant viral defense that limits the accumulation of viral RNAs. This is Movement and RNA silencing protein (DNA-M) from Banana bunchy top virus (isolate Autralia) (BBTV).